Reading from the N-terminus, the 263-residue chain is Small ribosomal subunit protein uS15m (263 aa).

The N-terminal 70 residues, 1-70 (MVLKSVFRST…VRQYARPSRK (70 aa)), are a transit peptide targeting the mitochondrion. The segment covering 238–251 (EREKQKAEEAERKK) has biased composition (basic and acidic residues). Residues 238–263 (EREKQKAEEAERKKSSSSTNPQETAA) are disordered.

Belongs to the universal ribosomal protein uS15 family. As to quaternary structure, component of the mitochondrial ribosome small subunit (28S) which comprises a 12S rRNA and about 30 distinct proteins.

It localises to the mitochondrion. This chain is Small ribosomal subunit protein uS15m (mrps15), found in Danio rerio (Zebrafish).